We begin with the raw amino-acid sequence, 128 residues long: Group 2 truncated hemoglobin GlbO (128 aa).

A cross-link (isodityrosine (Tyr-Tyr)) is located at residues 23 to 36; that stretch reads YAQVAEDEVLRRVY. Position 36 is a 3',4'-dihydroxyphenylalanine (Y36). H75 serves as a coordination point for heme.

It belongs to the truncated hemoglobin family. Group II subfamily. In terms of assembly, homododecamer. Heme serves as cofactor. Contains L-DOPA (3',4'-dihydroxyphenylalanine).

The protein is Group 2 truncated hemoglobin GlbO (glbO) of Mycobacterium bovis (strain ATCC BAA-935 / AF2122/97).